Consider the following 882-residue polypeptide: MNAPAKFSTSQIRSDFLAFFEGKGHTIVPSAPLVPGNDPTLLFTNSGMVQFKDVFLGAEKRSYVRAADVQRCLRAGGKHNDLDSVGYTARHHTFFEMLGNWSFGDYFKKDAIAWAWELLTQVWKLPADRLLVTVYHTDEEAFALWRDVIGIPESRIVRIGDNKGAPYASDNFWQMADTGPCGPCTEIFFDHGDHIAGGPPGSPDEDGDRFIEIWNLVFMQFDRQPDGTLVPLPAPCVDTGMGLERLAAILQHVHTNYEIDLFQTLIGKAGSLTGVADLENKSLRVIADHIRACSFLIVDGVLPSNEGRGYVLRRIIRRALRHGWMLGVRQPFFSKMVPTLVELMGEAYPELVVAKDTVARALSAEEERFAETLDAGMKIFDEVASRSQDIIPGADAFRLYDTYGFPVDLTADIARERGMRVDMEGFEFAMERQRETARAAGKFGGGVALPADLVASMSPTVFLGYEAYDADALKVVAILRQGRPVERAEAGDEVIVFTDRTPFYAESGGQVGDSGQLSGPGVSVEVADTQKFAGQFHGHVGRISEGALALGDVLAGEIDTQRRGKTILNHSATHLLHAALREVLGTHVQQKGSLVAPDRLRFDFSHFQPITADELAVIERKVNAEVRTNHGVEVHNMAMQEALDFGAMALFGEKYGENVRVLKMGGYSTELCGGTHVTRTGDIGLFKITSEGGVSSGVRRIEAVTGQGALDYVADEERRLLEAANLLGGNTTEVVDKVRALTERQKRLERELESLKAKLASGATADLGARAIDVAGVKVVAVRLEGFDAKALRDAMDRLKQQLGDSVIVLAGASGGKVALVAGVNGSPTGKVKAGELLGHIASQIGGKGGGRPDLAQGGGEDGPALATALDGVPLWVKQHLG.

4 residues coordinate Zn(2+): histidine 570, histidine 574, cysteine 672, and histidine 676.

The protein belongs to the class-II aminoacyl-tRNA synthetase family. It depends on Zn(2+) as a cofactor.

The protein resides in the cytoplasm. It catalyses the reaction tRNA(Ala) + L-alanine + ATP = L-alanyl-tRNA(Ala) + AMP + diphosphate. Catalyzes the attachment of alanine to tRNA(Ala) in a two-step reaction: alanine is first activated by ATP to form Ala-AMP and then transferred to the acceptor end of tRNA(Ala). Also edits incorrectly charged Ser-tRNA(Ala) and Gly-tRNA(Ala) via its editing domain. The sequence is that of Alanine--tRNA ligase from Xanthomonas axonopodis pv. citri (strain 306).